The following is a 261-amino-acid chain: uncharacterized protein (261 aa).

The signal sequence occupies residues 1-22 (MRDSKRVVLYISIMVLSIFIIG). A lipid anchor (N-palmitoyl cysteine) is attached at cysteine 23. A lipid anchor (S-diacylglycerol cysteine) is attached at cysteine 23.

The protein belongs to the staphylococcal tandem lipoprotein family.

It localises to the cell membrane. This is an uncharacterized protein from Staphylococcus aureus (strain N315).